The chain runs to 152 residues: Regulatory protein RecX (152 aa).

This sequence belongs to the RecX family.

Its subcellular location is the cytoplasm. Functionally, modulates RecA activity. In Haemophilus influenzae (strain PittGG), this protein is Regulatory protein RecX.